The sequence spans 285 residues: Phosphoribosylaminoimidazole-succinocarboxamide synthase (285 aa).

The protein belongs to the SAICAR synthetase family.

The catalysed reaction is 5-amino-1-(5-phospho-D-ribosyl)imidazole-4-carboxylate + L-aspartate + ATP = (2S)-2-[5-amino-1-(5-phospho-beta-D-ribosyl)imidazole-4-carboxamido]succinate + ADP + phosphate + 2 H(+). Its pathway is purine metabolism; IMP biosynthesis via de novo pathway; 5-amino-1-(5-phospho-D-ribosyl)imidazole-4-carboxamide from 5-amino-1-(5-phospho-D-ribosyl)imidazole-4-carboxylate: step 1/2. The polypeptide is Phosphoribosylaminoimidazole-succinocarboxamide synthase (Leptospira interrogans serogroup Icterohaemorrhagiae serovar copenhageni (strain Fiocruz L1-130)).